A 429-amino-acid polypeptide reads, in one-letter code: Trehalose-phosphate phosphatase (429 aa).

The active-site Nucleophile is D181. Mg(2+) is bound by residues D181, D183, and D368. 181–183 (DFD) provides a ligand contact to substrate.

This sequence belongs to the trehalose phosphatase family. Mg(2+) serves as cofactor.

The enzyme catalyses alpha,alpha-trehalose 6-phosphate + H2O = alpha,alpha-trehalose + phosphate. Its pathway is glycan biosynthesis; trehalose biosynthesis. Its function is as follows. Removes the phosphate from trehalose 6-phosphate to produce free trehalose. This is Trehalose-phosphate phosphatase (otsB) from Mycobacterium leprae (strain TN).